A 61-amino-acid polypeptide reads, in one-letter code: Protein YncO (61 aa).

The chain crosses the membrane as a helical span at residues 18 to 38 (HVFLYVFYIFLFLVLFIMTIY).

The protein localises to the cell inner membrane. In Escherichia coli (strain K12), this protein is Protein YncO.